A 193-amino-acid polypeptide reads, in one-letter code: MARLIYLMGPSGAGKDCLLSALRNATPQNRVVAHRYITRPADAGAENHVALSKQEFIQRAEQGLFALHWQAHQHCYAIGIEINLWLQHGLDVLVNGSRAYLPEAQRRYRHQLLPLCLTVSPAILAQRLRQRGRENSEQIDARLQRAQHYQQQLPSHCLQLCNDGELQHTLNQLQQLLTLDTPLSDPVEDKPCN.

9 to 16 (GPSGAGKD) provides a ligand contact to ATP.

Belongs to the ribose 1,5-bisphosphokinase family.

The catalysed reaction is alpha-D-ribose 1,5-bisphosphate + ATP = 5-phospho-alpha-D-ribose 1-diphosphate + ADP. It participates in metabolic intermediate biosynthesis; 5-phospho-alpha-D-ribose 1-diphosphate biosynthesis; 5-phospho-alpha-D-ribose 1-diphosphate from D-ribose 5-phosphate (route II): step 3/3. Catalyzes the phosphorylation of ribose 1,5-bisphosphate to 5-phospho-D-ribosyl alpha-1-diphosphate (PRPP). This is Ribose 1,5-bisphosphate phosphokinase PhnN from Yersinia pestis.